The primary structure comprises 87 residues: Toxin Css39.8 (87 aa).

Positions 1–19 (MNSLLMITACFFLIGTVWA) are cleaved as a signal peptide. The region spanning 20-85 (KEGYLVNKST…TYPLPNKSCS (66 aa)) is the LCN-type CS-alpha/beta domain. 4 cysteine pairs are disulfide-bonded: Cys31-Cys84, Cys35-Cys60, Cys44-Cys65, and Cys48-Cys67.

The protein belongs to the long (4 C-C) scorpion toxin superfamily. Sodium channel inhibitor family. Beta subfamily. In terms of tissue distribution, expressed by the venom gland.

It localises to the secreted. Beta toxins bind voltage-independently at site-4 of sodium channels (Nav) and shift the voltage of activation toward more negative potentials thereby affecting sodium channel activation and promoting spontaneous and repetitive firing. This toxin is lethal to crustaceans (freshwater crayfish (Cambarellus montezumae spp.)), it provokes a reversible paralysis to insects (crickets (Achaeta spp.)), but is not toxic to mice. At high concentrations, it does displace the (beta) mammal-specific toxin Cn2 from rat brain synaptosomes. This is Toxin Css39.8 from Centruroides suffusus (Durango bark scorpion).